A 146-amino-acid polypeptide reads, in one-letter code: MKAIVQRVASARVDIAGQTVGAIGAGLLVLLCAERGDADAMADRMLAKLLKLRIFSDEAGKMNRSVQDIGGGLLVVSQFTLAADVSGGNRPSFTQAAAPDEGRRLYDYFVHRARAAHPLVATGEFGADMQVHLVNDGPVTIPLQMA.

Residues 137–138 (GP) carry the Gly-cisPro motif, important for rejection of L-amino acids motif.

It belongs to the DTD family. Homodimer.

It is found in the cytoplasm. It catalyses the reaction glycyl-tRNA(Ala) + H2O = tRNA(Ala) + glycine + H(+). The catalysed reaction is a D-aminoacyl-tRNA + H2O = a tRNA + a D-alpha-amino acid + H(+). Functionally, an aminoacyl-tRNA editing enzyme that deacylates mischarged D-aminoacyl-tRNAs. Also deacylates mischarged glycyl-tRNA(Ala), protecting cells against glycine mischarging by AlaRS. Acts via tRNA-based rather than protein-based catalysis; rejects L-amino acids rather than detecting D-amino acids in the active site. By recycling D-aminoacyl-tRNA to D-amino acids and free tRNA molecules, this enzyme counteracts the toxicity associated with the formation of D-aminoacyl-tRNA entities in vivo and helps enforce protein L-homochirality. This chain is D-aminoacyl-tRNA deacylase, found in Variovorax paradoxus (strain S110).